The chain runs to 331 residues: MRIDVLSIFPEYLEPLKLSLIGKAVTDGLLQLQVTDPREFATDRHRTVDDTPYGGGAGMVMKPEPWARALESVLRAGSDTTARSGSTAATSASAQQATRLGPDDDAAQPGDAGQGTAAPDYARTGGTPGAGRAASSRPVLVVPSPAGEVFTQEVAYELAEEEHLVFACGRYEGIDERFIEWARDEVRVRPLSLGDYVLNGGEVAVLAMVEAVTRLVPGVIGNPESLDEESHTGGLLEYPVYTKPAQWRERTVPDTLLSGHHGRIARWRRDQQLERTARRRPDMVLALDPATLDRADLAVLAAEGFTLRDGQWQRCSPAPSEQAPEGARDMA.

Composition is skewed to low complexity over residues 77–99 (GSDTTARSGSTAATSASAQQATR) and 107–134 (AQPGDAGQGTAAPDYARTGGTPGAGRAA). The segment at 77–137 (GSDTTARSGS…PGAGRAASSR (61 aa)) is disordered. S-adenosyl-L-methionine contacts are provided by residues Gly169 and 193-198 (LGDYVL). The disordered stretch occupies residues 312 to 331 (WQRCSPAPSEQAPEGARDMA).

It belongs to the RNA methyltransferase TrmD family. In terms of assembly, homodimer.

Its subcellular location is the cytoplasm. The enzyme catalyses guanosine(37) in tRNA + S-adenosyl-L-methionine = N(1)-methylguanosine(37) in tRNA + S-adenosyl-L-homocysteine + H(+). Its function is as follows. Specifically methylates guanosine-37 in various tRNAs. This Kocuria rhizophila (strain ATCC 9341 / DSM 348 / NBRC 103217 / DC2201) protein is tRNA (guanine-N(1)-)-methyltransferase.